Reading from the N-terminus, the 138-residue chain is uncharacterized protein (138 aa).

2 consecutive transmembrane segments (helical) span residues 1-21 and 46-66; these read MEIG…EAIV and YAFI…HKFV.

Its subcellular location is the cell membrane. This is an uncharacterized protein from Methanocaldococcus jannaschii (strain ATCC 43067 / DSM 2661 / JAL-1 / JCM 10045 / NBRC 100440) (Methanococcus jannaschii).